The sequence spans 668 residues: tRNA 5-methylaminomethyl-2-thiouridine biosynthesis bifunctional protein MnmC (668 aa).

The tRNA (mnm(5)s(2)U34)-methyltransferase stretch occupies residues 1–245; sequence MKHYSIQPAN…KREMLCGVME (245 aa). The segment at 270 to 668 is FAD-dependent cmnm(5)s(2)U34 oxidoreductase; that stretch reads IGGGIASALL…LLKGKAVKAG (399 aa).

This sequence in the N-terminal section; belongs to the methyltransferase superfamily. tRNA (mnm(5)s(2)U34)-methyltransferase family. It in the C-terminal section; belongs to the DAO family. Requires FAD as cofactor.

It localises to the cytoplasm. It catalyses the reaction 5-aminomethyl-2-thiouridine(34) in tRNA + S-adenosyl-L-methionine = 5-methylaminomethyl-2-thiouridine(34) in tRNA + S-adenosyl-L-homocysteine + H(+). Its function is as follows. Catalyzes the last two steps in the biosynthesis of 5-methylaminomethyl-2-thiouridine (mnm(5)s(2)U) at the wobble position (U34) in tRNA. Catalyzes the FAD-dependent demodification of cmnm(5)s(2)U34 to nm(5)s(2)U34, followed by the transfer of a methyl group from S-adenosyl-L-methionine to nm(5)s(2)U34, to form mnm(5)s(2)U34. In Escherichia coli O6:H1 (strain CFT073 / ATCC 700928 / UPEC), this protein is tRNA 5-methylaminomethyl-2-thiouridine biosynthesis bifunctional protein MnmC.